A 441-amino-acid chain; its full sequence is tRNA modification GTPase MnmE (441 aa).

(6S)-5-formyl-5,6,7,8-tetrahydrofolate-binding residues include arginine 23, glutamate 81, and arginine 121. Residues 219–366 (GFTVVLAGAP…LLDAIQAAAE (148 aa)) enclose the TrmE-type G domain. Residues 229-234 (NSGKST), 248-254 (SDSPGTT), and 273-276 (DTAG) each bind GTP. Mg(2+) contacts are provided by serine 233 and threonine 254. Lysine 441 serves as a coordination point for (6S)-5-formyl-5,6,7,8-tetrahydrofolate.

The protein belongs to the TRAFAC class TrmE-Era-EngA-EngB-Septin-like GTPase superfamily. TrmE GTPase family. Homodimer. Heterotetramer of two MnmE and two MnmG subunits. K(+) serves as cofactor.

It localises to the cytoplasm. Its function is as follows. Exhibits a very high intrinsic GTPase hydrolysis rate. Involved in the addition of a carboxymethylaminomethyl (cmnm) group at the wobble position (U34) of certain tRNAs, forming tRNA-cmnm(5)s(2)U34. This chain is tRNA modification GTPase MnmE, found in Methylobacterium radiotolerans (strain ATCC 27329 / DSM 1819 / JCM 2831 / NBRC 15690 / NCIMB 10815 / 0-1).